A 451-amino-acid chain; its full sequence is UDP-N-acetylmuramoylalanine--D-glutamate ligase (451 aa).

Residue 118–124 coordinates ATP; it reads GTKGKST.

Belongs to the MurCDEF family.

The protein resides in the cytoplasm. It carries out the reaction UDP-N-acetyl-alpha-D-muramoyl-L-alanine + D-glutamate + ATP = UDP-N-acetyl-alpha-D-muramoyl-L-alanyl-D-glutamate + ADP + phosphate + H(+). It participates in cell wall biogenesis; peptidoglycan biosynthesis. In terms of biological role, cell wall formation. Catalyzes the addition of glutamate to the nucleotide precursor UDP-N-acetylmuramoyl-L-alanine (UMA). The chain is UDP-N-acetylmuramoylalanine--D-glutamate ligase from Borreliella afzelii (strain PKo) (Borrelia afzelii).